The following is a 243-amino-acid chain: GTP cyclohydrolase 1 type 2 (243 aa).

Residues H63, H64, D102, H209, and E213 each coordinate a divalent metal cation.

This sequence belongs to the GTP cyclohydrolase I type 2/NIF3 family. Homohexamer.

It catalyses the reaction GTP + H2O = 7,8-dihydroneopterin 3'-triphosphate + formate + H(+). Its pathway is cofactor biosynthesis; 7,8-dihydroneopterin triphosphate biosynthesis; 7,8-dihydroneopterin triphosphate from GTP: step 1/1. Functionally, converts GTP to dihydroneopterin triphosphate. In Helicobacter pylori (strain J99 / ATCC 700824) (Campylobacter pylori J99), this protein is GTP cyclohydrolase 1 type 2.